Here is a 153-residue protein sequence, read N- to C-terminus: 4'-phosphopantetheinyl transferase B, mitochondrial (153 aa).

Belongs to the P-Pant transferase superfamily.

It is found in the mitochondrion. It catalyses the reaction apo-[ACP] + CoA = holo-[ACP] + adenosine 3',5'-bisphosphate + H(+). Functionally, acyl-carrier-protein synthase transfers the 4'-phosphopantetheine moiety from coenzyme A to a Ser of an acyl-carrier-protein. The 4'-phosphopantetheine (4'-PPT) portion of CoA provides the essential prosthetic group for a number of carrier proteins and multi-domain enzymes, priming them for the acceptance of acyl building blocks in fatty acid synthesis and many aspects of secondary metabolism mediated by polyketide synthases (PKSs) and non-ribosomal peptide synthetases (NRPSs). PptB is specific for the mitochondrial acyl carrier protein acpA. The sequence is that of 4'-phosphopantetheinyl transferase B, mitochondrial from Aspergillus fumigatus (strain ATCC MYA-4609 / CBS 101355 / FGSC A1100 / Af293) (Neosartorya fumigata).